Reading from the N-terminus, the 600-residue chain is UvrABC system protein C (600 aa).

The region spanning 15 to 92 is the GIY-YIG domain; the sequence is EKAGCYLMKD…IKKYQPYYNV (78 aa). Positions 197–232 constitute a UVR domain; it reads QEVKKDLTNKMLQASADLEFERAGELRDQLKYIEET.

Belongs to the UvrC family. As to quaternary structure, interacts with UvrB in an incision complex.

The protein localises to the cytoplasm. In terms of biological role, the UvrABC repair system catalyzes the recognition and processing of DNA lesions. UvrC both incises the 5' and 3' sides of the lesion. The N-terminal half is responsible for the 3' incision and the C-terminal half is responsible for the 5' incision. In Lactobacillus delbrueckii subsp. bulgaricus (strain ATCC BAA-365 / Lb-18), this protein is UvrABC system protein C.